A 374-amino-acid chain; its full sequence is MPLLTTPYAELDLIRQPDQANDPLQAFDAADEYLLEQLHAQQLAAESRVLVLNDSFGALAASLVDHVSVVSSGDSHLAHMALEKNLARNGKAFDSVPFVPASEHWQGHFDRVLVRVPKTLALLEEQLIRLQGHLAPGAQVIAAAMIKHLPRAAGELLEKYIGPVQASLAQKKARLLTANFAQRPGASSPYPTRYRLDSPALELLNHANVFCRDGLDIGTRAFLPHLPRDLGNARVADLGCGNGVLAIANALTNPQAHYTLVDESYMAVQSAQENWQAALGDRAVTVLAGDGLAGVEKQSLDVVLCNPPFHQQQVVGDFLAWRMFQQAREALVVGGALYIVGNRHLGYHSKLARLFRGVEQVAATPKFVILKARK.

The protein belongs to the methyltransferase superfamily. RlmG family.

The protein resides in the cytoplasm. The catalysed reaction is guanosine(1835) in 23S rRNA + S-adenosyl-L-methionine = N(2)-methylguanosine(1835) in 23S rRNA + S-adenosyl-L-homocysteine + H(+). Its function is as follows. Specifically methylates the guanine in position 1835 (m2G1835) of 23S rRNA. This Pseudomonas putida (strain W619) protein is Ribosomal RNA large subunit methyltransferase G.